The primary structure comprises 98 residues: Plastocyanin (98 aa).

The 98-residue stretch at 1-98 (AAIVKLGGDD…AGMKMTITVQ (98 aa)) folds into the Plastocyanin-like domain. The Cu cation site is built by histidine 38, cysteine 83, histidine 86, and methionine 91.

The protein belongs to the plastocyanin family. Requires Cu(2+) as cofactor.

The protein localises to the plastid. It localises to the chloroplast thylakoid membrane. Participates in electron transfer between P700 and the cytochrome b6-f complex in photosystem I. This is Plastocyanin (PETE) from Ulva prolifera (Green seaweed).